Reading from the N-terminus, the 1479-residue chain is Type VII secretion system protein EssC (1479 aa).

Residues 1–229 (MHKLIIKYNK…RPPQPIQKNN (229 aa)) are Cytoplasmic-facing. The helical transmembrane segment at 230–252 (TVIWRSIIPPLVMIALTVVIFLV) threads the bilayer. Topologically, residues 253–256 (RPIG) are extracellular. The helical transmembrane segment at 257 to 279 (IYILMMIGMSSVTIVFGITTYFS) threads the bilayer. At 280-1479 (EKKKYNKDVE…QAYQKIRWFK (1200 aa)) the chain is on the cytoplasmic side. 2 consecutive FtsK domains span residues 652-846 (DDIL…QDSN) and 997-1183 (QGPM…SEVS). ATP contacts are provided by residues 672-679 (GTTGSGKS) and 1014-1021 (GSPGYGRT).

It belongs to the EssC family. Homooligomer. Interacts with EsaE.

It is found in the cell membrane. Component of the type VII secretion system (Ess). Required for the secretion of substrates including EsxA and EsxB. However, unable to support secretion of the substrate protein EsxC. The protein is Type VII secretion system protein EssC of Staphylococcus aureus (strain MSSA476).